We begin with the raw amino-acid sequence, 217 residues long: Protein matrimony (217 aa).

The POLO box domain (PBD)-binding signature appears at 39 to 41; that stretch reads STP. Phosphoserine is present on residues serine 63 and serine 66. Positions 83-106 are disordered; the sequence is KQQQQQQHQHCHRTQLKPPPFVLP. Residues 157–217 form the SAM domain; it reads NHAANVEQIL…NRIMDVLHTL (61 aa).

In terms of assembly, interacts with polo. Interacts with cort. Probably ubiquitinated: degraded during the oocyte-to-embryo transition by the anaphase promoting complex/cyclosome (APC/C) containing cort protein.

The protein localises to the nucleus. The protein resides in the chromosome. In terms of biological role, polo kinase inhibitor required to maintain G2 arrest in the meiotic cell cycle in females. Holds heterochromatically paired homologs together from the end of pachytene until metaphase I. Haploinsufficient locus for homologous achiasmate segregation and may be required for the maintenance of heterochromatic pairings. The chain is Protein matrimony from Drosophila melanogaster (Fruit fly).